The sequence spans 215 residues: tRNA (guanine-N(7)-)-methyltransferase (215 aa).

S-adenosyl-L-methionine-binding residues include glutamate 43, glutamate 68, aspartate 95, and aspartate 117. Residue aspartate 117 is part of the active site. Substrate contacts are provided by residues lysine 121, aspartate 153, and 190–193 (TEYE).

The protein belongs to the class I-like SAM-binding methyltransferase superfamily. TrmB family.

It carries out the reaction guanosine(46) in tRNA + S-adenosyl-L-methionine = N(7)-methylguanosine(46) in tRNA + S-adenosyl-L-homocysteine. It participates in tRNA modification; N(7)-methylguanine-tRNA biosynthesis. Functionally, catalyzes the formation of N(7)-methylguanine at position 46 (m7G46) in tRNA. This chain is tRNA (guanine-N(7)-)-methyltransferase, found in Staphylococcus epidermidis (strain ATCC 35984 / DSM 28319 / BCRC 17069 / CCUG 31568 / BM 3577 / RP62A).